The primary structure comprises 200 residues: V-type proton ATPase subunit E (200 aa).

It belongs to the V-ATPase E subunit family.

Functionally, produces ATP from ADP in the presence of a proton gradient across the membrane. This chain is V-type proton ATPase subunit E, found in Thermoanaerobacter pseudethanolicus (strain ATCC 33223 / 39E) (Clostridium thermohydrosulfuricum).